Consider the following 193-residue polypeptide: 5'RNA triphosphatase A449R (193 aa).

The cofactor is Mn(2+).

It catalyses the reaction a 5'-end triphospho-ribonucleoside in mRNA + H2O = a 5'-end diphospho-ribonucleoside in mRNA + phosphate + H(+). Catalyzes the first stes of cap formation: by removing the gamma-phosphate from the 5'-triphosphate end of nascent mRNA to yield a diphosphate end. The chain is 5'RNA triphosphatase A449R (A449R) from Chlorella (PBCV-1).